We begin with the raw amino-acid sequence, 679 residues long: Glycine--tRNA ligase beta subunit (679 aa).

The protein belongs to the class-II aminoacyl-tRNA synthetase family. Tetramer of two alpha and two beta subunits.

The protein localises to the cytoplasm. It catalyses the reaction tRNA(Gly) + glycine + ATP = glycyl-tRNA(Gly) + AMP + diphosphate. The protein is Glycine--tRNA ligase beta subunit of Streptococcus agalactiae serotype Ia (strain ATCC 27591 / A909 / CDC SS700).